We begin with the raw amino-acid sequence, 1026 residues long: DNA polymerase catalytic subunit (1026 aa).

Positions 664–695 (LKTWLAKRKSIKKELEQCQDAKMKTILDKQQL) form a coiled coil.

Belongs to the DNA polymerase type-B family.

It localises to the host nucleus. It catalyses the reaction DNA(n) + a 2'-deoxyribonucleoside 5'-triphosphate = DNA(n+1) + diphosphate. Its function is as follows. Replicates viral genomic DNA. The chain is DNA polymerase catalytic subunit (9) from Alcelaphine herpesvirus 1 (strain C500) (AlHV-1).